The chain runs to 766 residues: Protein STB6 (766 aa).

Residues 447-469 form a disordered region; sequence VPSEQLTTSNKEDSDTQPTKRNS. Ser514 is subject to Phosphoserine.

The protein to yeast STB2.

Functionally, binds to SIN3. The protein is Protein STB6 (STB6) of Saccharomyces cerevisiae (strain ATCC 204508 / S288c) (Baker's yeast).